The primary structure comprises 138 residues: MSKILCIDYGKKRIGLSITNSIRSIAFGLDTVNSNNIICTLYKYLKYEDIDTIVIGLPIRFDNSLFPIEKDIKKFIKIINNKYPKLIIKRIDERFTSKIANYYLINTRLKINQLKKNQNFLDKDKISATILLQEYIKY.

Belongs to the YqgF nuclease family.

The protein resides in the cytoplasm. Its function is as follows. Could be a nuclease involved in processing of the 5'-end of pre-16S rRNA. This is Putative pre-16S rRNA nuclease from Karelsulcia muelleri (strain GWSS) (Sulcia muelleri).